The following is a 239-amino-acid chain: uncharacterized protein (239 aa).

The segment at 193-214 is disordered; the sequence is RKRKLNLSDGENKAKSPYSSIS.

It is found in the nucleus. This is an uncharacterized protein from Schizosaccharomyces pombe (strain 972 / ATCC 24843) (Fission yeast).